The following is a 340-amino-acid chain: Probable glucan endo-1,3-beta-glucosidase BG1 (340 aa).

The N-terminal stretch at 1–25 is a signal peptide; that stretch reads MDLRFLASLTLLLGLFFVNTNPTGG. Glutamate 120 functions as the Proton donor in the catalytic mechanism. The Nucleophile role is filled by glutamate 262.

This sequence belongs to the glycosyl hydrolase 17 family.

The protein localises to the secreted. It catalyses the reaction Hydrolysis of (1-&gt;3)-beta-D-glucosidic linkages in (1-&gt;3)-beta-D-glucans.. In terms of biological role, may play a role in plant defense against pathogens. The sequence is that of Probable glucan endo-1,3-beta-glucosidase BG1 from Arabidopsis thaliana (Mouse-ear cress).